The primary structure comprises 806 residues: Leucine--tRNA ligase (806 aa).

The short motif at 54–64 (SYPSGDLHMGH) is the 'HIGH' region element. Positions 571 to 575 (KMSKS) match the 'KMSKS' region motif. Lys-574 lines the ATP pocket.

It belongs to the class-I aminoacyl-tRNA synthetase family.

Its subcellular location is the cytoplasm. It catalyses the reaction tRNA(Leu) + L-leucine + ATP = L-leucyl-tRNA(Leu) + AMP + diphosphate. The protein is Leucine--tRNA ligase of Tropheryma whipplei (strain TW08/27) (Whipple's bacillus).